Consider the following 333-residue polypeptide: uncharacterized protein (333 aa).

The protein to E.coli YfeH.

This is an uncharacterized protein from Pseudomonas aeruginosa (strain ATCC 15692 / DSM 22644 / CIP 104116 / JCM 14847 / LMG 12228 / 1C / PRS 101 / PAO1).